The following is a 385-amino-acid chain: tRNA-specific 2-thiouridylase MnmA (385 aa).

ATP contacts are provided by residues 29 to 36 (GLSGGVDS) and leucine 55. The active-site Nucleophile is the cysteine 116. Cysteine 116 and cysteine 225 are oxidised to a cystine. Residue glycine 141 participates in ATP binding. Residues 175–177 (KDQ) form an interaction with tRNA region. Residue cysteine 225 is the Cysteine persulfide intermediate of the active site. The segment at 330–331 (RY) is interaction with tRNA.

The protein belongs to the MnmA/TRMU family.

The protein localises to the cytoplasm. It carries out the reaction S-sulfanyl-L-cysteinyl-[protein] + uridine(34) in tRNA + AH2 + ATP = 2-thiouridine(34) in tRNA + L-cysteinyl-[protein] + A + AMP + diphosphate + H(+). Functionally, catalyzes the 2-thiolation of uridine at the wobble position (U34) of tRNA, leading to the formation of s(2)U34. This chain is tRNA-specific 2-thiouridylase MnmA, found in Prochlorococcus marinus (strain AS9601).